A 216-amino-acid polypeptide reads, in one-letter code: Probable GTP-binding protein EngB (216 aa).

Residues 37–214 (QGLEVAFAGR…RAAIIKLVAE (178 aa)) enclose the EngB-type G domain. GTP-binding positions include 45 to 52 (GRSNVGKS), 72 to 76 (GRTQE), 92 to 95 (DMPG), 159 to 162 (TKAD), and 193 to 195 (TSS). Mg(2+)-binding residues include S52 and T74.

It belongs to the TRAFAC class TrmE-Era-EngA-EngB-Septin-like GTPase superfamily. EngB GTPase family. The cofactor is Mg(2+).

Its function is as follows. Necessary for normal cell division and for the maintenance of normal septation. The chain is Probable GTP-binding protein EngB from Rhodopseudomonas palustris (strain BisA53).